Reading from the N-terminus, the 75-residue chain is Protein BRICK1 (75 aa).

A2 is subject to N-acetylalanine. The stretch at 41–72 (MSCRSRLATLNEKLTALERRIEYIEARVTKGE) forms a coiled coil.

This sequence belongs to the BRK1 family. As to quaternary structure, homotrimer when in free form. Directly interacts with WASF2. Component of the WAVE1 complex composed of ABI2, CYFIP1 or CYFIP2, BRK1, NCKAP1 and WASF1/WAVE1. Within the complex, a heterodimer containing NCKAP1 and CYFIP1 interacts with a heterotrimer formed by WAVE1, ABI2 and BRK1.

It is found in the cytoplasm. The protein localises to the cytoskeleton. Involved in regulation of actin and microtubule organization. Part of a WAVE complex that activates the Arp2/3 complex. As component of the WAVE1 complex, required for BDNF-NTRK2 endocytic trafficking and signaling from early endosomes. In Homo sapiens (Human), this protein is Protein BRICK1 (BRK1).